A 571-amino-acid chain; its full sequence is Carboxylesterase 3B (571 aa).

Residues 1-31 (MTNMRTMIPAGSSVLVWVTCLLLAFVTTVTG) form the signal peptide. A disulfide bond links C100 and C127. S232 functions as the Acyl-ester intermediate in the catalytic mechanism. C284 and C295 form a disulfide bridge. N311 carries an N-linked (GlcNAc...) asparagine glycan. Active-site charge relay system residues include E347 and H460. Positions 568 to 571 (PEEL) match the Prevents secretion from ER motif.

This sequence belongs to the type-B carboxylesterase/lipase family.

It is found in the endoplasmic reticulum lumen. The enzyme catalyses a carboxylic ester + H2O = an alcohol + a carboxylate + H(+). Its function is as follows. Involved in the detoxification of xenobiotics and in the activation of ester and amide prodrugs. The sequence is that of Carboxylesterase 3B (Ces3b) from Mus musculus (Mouse).